A 214-amino-acid chain; its full sequence is Large ribosomal subunit protein bL25 (214 aa).

The interval Thr194 to Glu214 is disordered. Residues Glu204 to Glu214 are compositionally biased toward basic and acidic residues.

The protein belongs to the bacterial ribosomal protein bL25 family. CTC subfamily. As to quaternary structure, part of the 50S ribosomal subunit; part of the 5S rRNA/L5/L18/L25 subcomplex. Contacts the 5S rRNA. Binds to the 5S rRNA independently of L5 and L18.

Its function is as follows. This is one of the proteins that binds to the 5S RNA in the ribosome where it forms part of the central protuberance. The sequence is that of Large ribosomal subunit protein bL25 from Thermotoga petrophila (strain ATCC BAA-488 / DSM 13995 / JCM 10881 / RKU-1).